The primary structure comprises 312 residues: Methionyl-tRNA formyltransferase (312 aa).

107-110 is a binding site for (6S)-5,6,7,8-tetrahydrofolate; that stretch reads SLLP.

Belongs to the Fmt family.

The catalysed reaction is L-methionyl-tRNA(fMet) + (6R)-10-formyltetrahydrofolate = N-formyl-L-methionyl-tRNA(fMet) + (6S)-5,6,7,8-tetrahydrofolate + H(+). Functionally, attaches a formyl group to the free amino group of methionyl-tRNA(fMet). The formyl group appears to play a dual role in the initiator identity of N-formylmethionyl-tRNA by promoting its recognition by IF2 and preventing the misappropriation of this tRNA by the elongation apparatus. The protein is Methionyl-tRNA formyltransferase of Borreliella burgdorferi (strain ZS7) (Borrelia burgdorferi).